The sequence spans 579 residues: MNIIQSFTHRLSDLIKQYPLAMSFIFISTAFIPWIQDESISRDMIVVLLLPIYFSTVLLLNKRKYANGLAIAYAILITLAFYFAERPIYDNDAYWGLLLIHFVLFVTYPLAKENRLFVYNTVSRLTQLALAIVLAGIICICAVLVLNSIEYLFNINLLSYRIVPKTLLFIMCFFTPVFFLIFEQRLAQNFQGERFHYVIELIVNFIFSPVVILYTLIVYLYLAKILFYFELPKGGVAYIIMPYIALGLCCQGLRLLLIDAKWTGFYRVFAYLSIAPLVLLWVGIHTRITTYGLTEIRVMLVVLASMMTLFILFSMTQRLQQYRLFSLTACLLLFISTILTSPYYLAQQHQLARFERLLSELNILDEQQQISATIFDSQFAKQLSSEQVEKYKQLEEIIGGYIKTNPVAVAKYGQEKLNYLHGFYYNQIIYNTPYQDEEASITFYAYDTRRQDNYTIDIAPYQTLHLINGYVNSGDPNERETQTQETSTLFQRQFDLIDKHNKYSFDEHYFVEVFKAAGLDIHQKYSQDTLLPLAKELTQVPTREGGLLIFRDMDFKYEVHGDIKGYVYQGGYIEFYLAP.

11 consecutive transmembrane segments (helical) span residues 13–35, 39–61, 66–83, 93–110, 130–152, 162–181, 201–223, 238–257, 264–286, 296–315, and 324–346; these read DLIK…IPWI, SISR…LLLN, ANGL…AFYF, AYWG…TYPL, LAIV…IEYL, IVPK…FFLI, LIVN…LYLA, YIIM…RLLL, GFYR…GIHT, IRVM…LFSM, and LFSL…YYLA.

Its subcellular location is the cell membrane. This is an uncharacterized protein from Pasteurella multocida (strain Pm70).